Consider the following 151-residue polypeptide: Myosin light polypeptide 6 (151 aa).

Position 2 is an N-acetylcysteine (Cys-2). Positions 7–42 (DQTAEFKEAFQLFDRTGDGKILYSQCGDVMRALGQN) constitute an EF-hand 1 domain. Ser-57 carries the post-translational modification Phosphoserine. Lys-81 is modified (N6-acetyllysine). 2 EF-hand domains span residues 84–119 (GTYE…LGEK) and 119–151 (KMTE…VLNG).

Myosin is a hexamer of 2 heavy chains and 4 light chains. Interacts with SPATA6.

In terms of biological role, regulatory light chain of myosin. Does not bind calcium. In Rattus norvegicus (Rat), this protein is Myosin light polypeptide 6 (Myl6).